Reading from the N-terminus, the 78-residue chain is UPF0291 protein Ldb1355 (78 aa).

This sequence belongs to the UPF0291 family.

The protein localises to the cytoplasm. This is UPF0291 protein Ldb1355 from Lactobacillus delbrueckii subsp. bulgaricus (strain ATCC 11842 / DSM 20081 / BCRC 10696 / JCM 1002 / NBRC 13953 / NCIMB 11778 / NCTC 12712 / WDCM 00102 / Lb 14).